Here is a 253-residue protein sequence, read N- to C-terminus: Trypsin beta (253 aa).

Positions 1-22 (MLKFVILLSAVACALGGTIPEG) are cleaved as a signal peptide. Residues 23-30 (LLPQLDGR) constitute a propeptide, activation peptide. Residues 31 to 253 (IVGGTATTIS…DLRSWVINNA (223 aa)) enclose the Peptidase S1 domain. Cysteine 56 and cysteine 72 are joined by a disulfide. Catalysis depends on charge relay system residues histidine 71 and aspartate 116. Cystine bridges form between cysteine 180–cysteine 197 and cysteine 206–cysteine 230. The Charge relay system role is filled by serine 210.

This sequence belongs to the peptidase S1 family.

Its subcellular location is the secreted. It is found in the extracellular space. It carries out the reaction Preferential cleavage: Arg-|-Xaa, Lys-|-Xaa.. The chain is Trypsin beta (betaTry) from Drosophila erecta (Fruit fly).